Reading from the N-terminus, the 255-residue chain is tRNA1(Val) (adenine(37)-N6)-methyltransferase (255 aa).

This sequence belongs to the methyltransferase superfamily. tRNA (adenine-N(6)-)-methyltransferase family.

It is found in the cytoplasm. The catalysed reaction is adenosine(37) in tRNA1(Val) + S-adenosyl-L-methionine = N(6)-methyladenosine(37) in tRNA1(Val) + S-adenosyl-L-homocysteine + H(+). Its function is as follows. Specifically methylates the adenine in position 37 of tRNA(1)(Val) (anticodon cmo5UAC). This chain is tRNA1(Val) (adenine(37)-N6)-methyltransferase, found in Porphyromonas gingivalis (strain ATCC BAA-308 / W83).